The sequence spans 280 residues: Acetyl-coenzyme A carboxylase carboxyl transferase subunit beta (280 aa).

A CoA carboxyltransferase N-terminal domain is found at 25-280 (VMRECPICHA…RLHTKENAYG (256 aa)). Zn(2+) contacts are provided by C29, C32, C47, and C50. A C4-type zinc finger spans residues 29–50 (CPICHAKFLSMRLGRDHTCPKC).

It belongs to the AccD/PCCB family. As to quaternary structure, acetyl-CoA carboxylase is a heterohexamer composed of biotin carboxyl carrier protein (AccB), biotin carboxylase (AccC) and two subunits each of ACCase subunit alpha (AccA) and ACCase subunit beta (AccD). Zn(2+) is required as a cofactor.

The protein localises to the cytoplasm. The catalysed reaction is N(6)-carboxybiotinyl-L-lysyl-[protein] + acetyl-CoA = N(6)-biotinyl-L-lysyl-[protein] + malonyl-CoA. The protein operates within lipid metabolism; malonyl-CoA biosynthesis; malonyl-CoA from acetyl-CoA: step 1/1. Functionally, component of the acetyl coenzyme A carboxylase (ACC) complex. Biotin carboxylase (BC) catalyzes the carboxylation of biotin on its carrier protein (BCCP) and then the CO(2) group is transferred by the transcarboxylase to acetyl-CoA to form malonyl-CoA. This Lactobacillus helveticus (strain DPC 4571) protein is Acetyl-coenzyme A carboxylase carboxyl transferase subunit beta.